We begin with the raw amino-acid sequence, 363 residues long: NAD(P)H-quinone oxidoreductase subunit 1, chloroplastic (363 aa).

6 helical membrane-spanning segments follow: residues 27 to 47 (IWLF…VLVI), 98 to 118 (FSIG…VIPF), 127 to 147 (LSIG…GLLM), 248 to 268 (YSGI…LVSS), 300 to 320 (VFGT…FLFI), and 336 to 356 (LLNL…LLTT).

This sequence belongs to the complex I subunit 1 family. In terms of assembly, NDH is composed of at least 16 different subunits, 5 of which are encoded in the nucleus.

Its subcellular location is the plastid. The protein localises to the chloroplast thylakoid membrane. It carries out the reaction a plastoquinone + NADH + (n+1) H(+)(in) = a plastoquinol + NAD(+) + n H(+)(out). The enzyme catalyses a plastoquinone + NADPH + (n+1) H(+)(in) = a plastoquinol + NADP(+) + n H(+)(out). Functionally, NDH shuttles electrons from NAD(P)H:plastoquinone, via FMN and iron-sulfur (Fe-S) centers, to quinones in the photosynthetic chain and possibly in a chloroplast respiratory chain. The immediate electron acceptor for the enzyme in this species is believed to be plastoquinone. Couples the redox reaction to proton translocation, and thus conserves the redox energy in a proton gradient. In Amborella trichopoda, this protein is NAD(P)H-quinone oxidoreductase subunit 1, chloroplastic.